Reading from the N-terminus, the 177-residue chain is MSRVAKAPVTVPNGVTVTQNGRQVEVKGSKGTLSFNLHALVELKQEEGKLQLAPAKESKDAWMQAGTARAVLNNLVKGVSEGFERKLQLVGVGYKAVVKGTVVNLNLGYSHPIDYALPEGVTAETPTATEIILKSANKQLLGQVAAEIRAYRSPEPYKGKGVRYSDEVILRKEAKKK.

It belongs to the universal ribosomal protein uL6 family. In terms of assembly, part of the 50S ribosomal subunit.

Its function is as follows. This protein binds to the 23S rRNA, and is important in its secondary structure. It is located near the subunit interface in the base of the L7/L12 stalk, and near the tRNA binding site of the peptidyltransferase center. This is Large ribosomal subunit protein uL6 from Acinetobacter baumannii (strain SDF).